The primary structure comprises 478 residues: Ninja-family protein 8 (478 aa).

Disordered regions lie at residues 1–247 (MDDD…LTPG), 337–374 (FTAK…EKKA), and 454–478 (DAPA…SAEN). A compositionally biased stretch (basic and acidic residues) spans 23 to 35 (KARDAPLEPKAEP). Positions 169-179 (ISISTDDGSTG) are enriched in polar residues. Over residues 180-189 (ENEDVAESEA) the composition is skewed to acidic residues. Low complexity predominate over residues 233–242 (SFSGSESSSG). Residues 339–358 (AKDKADQTGTKQVDDGKKPQ) are compositionally biased toward basic and acidic residues.

It belongs to the Ninja family.

The protein localises to the nucleus. The protein is Ninja-family protein 8 of Zea mays (Maize).